A 768-amino-acid chain; its full sequence is Cullin-3 (768 aa).

N-acetylserine is present on Ser2. An interaction with KLHL18 region spans residues 2–41 (SNLSKGTGSRKDTKMRIRAFPMTMDEKYVNSIWDLLKNAI). The residue at position 585 (Ser585) is a Phosphoserine. Positions 677–698 (VAAKQGESDPERKETRQKVDDD) are disordered. Residues 682–698 (GESDPERKETRQKVDDD) show a composition bias toward basic and acidic residues. The region spanning 698 to 760 (DRKHEIEAAI…REYLARTPED (63 aa)) is the Cullin neddylation domain. Residue Lys712 forms a Glycyl lysine isopeptide (Lys-Gly) (interchain with G-Cter in NEDD8) linkage.

The protein belongs to the cullin family. Forms neddylation-dependent homodimers. Component of multiple BCR (BTB-CUL3-RBX1) E3 ubiquitin-protein ligase complexes formed of CUL3, RBX1 and a variable BTB domain-containing protein acting as both, adapter to cullin and substrate recognition subunit. The BCR complex may be active as a heterodimeric complex, in which NEDD8, covalently attached to one CUL3 molecule, binds to the C-terminus of a second CUL3 molecule. Interacts with RBX1, RNF7, CYCE and TIP120A/CAND1. Part of the BCR(SPOP) containing SPOP, and of BCR containing homodimeric SPOPL or the heterodimer formed by SPOP and SPOPL. Part of the probable BCR(KLHL9-KLHL13) complex with BTB domain proteins KLHL9 and KLHL13. Part of the BCR(KLHL41) complex containing KLHL41. Component of the BCR(KLHL12) E3 ubiquitin ligase complex, at least composed of CUL3 and KLHL12 and RBX1. Component of the BCR(KLHL3) E3 ubiquitin ligase complex, at least composed of CUL3 and KLHL3 and RBX1. Part of the BCR(ENC1) complex containing ENC1. Part of a complex consisting of BMI1/PCGF4, CUL3 and SPOP. Part of a complex consisting of BRMS1, CUL3 and SPOP. Component of the BCR(KLHL21) E3 ubiquitin ligase complex, at least composed of CUL3, KLHL21 and RBX1. Component of the BCR(KLHL22) E3 ubiquitin ligase complex, at least composed of CUL3, KLHL22 and RBX1. Component of the BCR(KLHL25) E3 ubiquitin ligase complex, at least composed of CUL3, KLHL25 and RBX1. Part of a complex consisting of MACROH2A1, CUL3 and SPOP. Component of the BCR(KLHL42) E3 ubiquitin ligase complex, at least composed of CUL3 and KLHL42. Component of the BCR(KBTBD8) E3 ubiquitin ligase complex, at least composed of CUL3, KBTBD8 and RBX1. Interacts with KLHL42 (via the BTB domain). Interacts with KATNA1; the interaction is enhanced by KLHL42. Interacts with KCTD5, KLHL9, KLHL11, KLHL13, GAN, ZBTB16, KLHL3, KLHL15, KLHL20, KLHL36, GMCL2, BTBD1. Part of a complex that contains CUL3, RBX1 and GAN. Interacts (via BTB domain) with KLHL17; the interaction regulates surface GRIK2 expression. Interacts with KCTD7. Part of the BCR(GAN) complex containing GAN. Part of the BCR(KEAP1) complex containing KEAP1. vInteracts with KLHL10. Interacts with KAT5 and ATF2. Interacts with KCTD17 in the BCR(KCTD17) E3 ubiquitin ligase complex, at least composed of CUL3, KCTD17 and RBX1. Interacts (when neddylated) with ARIH1; leading to activate the E3 ligase activity of ARIH1. Interacts with COPS9. Interacts with PPP2R5B; this interaction is indirect and mediated through KLHL15-binding and leads to PPP2R5B proteasomal degradation. Interacts with RBBP8/CtIP; this interaction is indirect and mediated through KLHL15-binding and leads to RBBP8 proteasomal degradation. Interacts with KLHL24 in the BCR(KLHL24) E3 ubiquitin ligase complex, composed of CUL3, RBX1 and KLHL24. Interacts with RHOBTB2. Interacts (via BTB domain) with KLHL17; the interaction regulates surface GRIK2 expression. Interacts with AURKA and KLHL18 (via BTB domain). Interacts (unneddylated form) with DCUN1D1, DCUN1D2, DCUN1D3, DCUN1D4 and DCUN1D5; these interactions promote the cullin neddylation. Component of a BCR3 (BTB-CUL3-RBX1) E3 ubiquitin ligase complex, also named Cul3-RING ubiquitin ligase complex CUL3(KBTBD6/7), composed of CUL3, RBX1, KBTBD6 and KBTBD7. Component of the BCR(KBTBD2) E3 ubiquitin ligase complex, at least composed of CUL3, KBTBD2 and RBX1. Interacts with KBTBD2 (via the BTB domain). Component of the BCR(KBTBD4) E3 ubiquitin ligase complex, at least composed of CUL3, KBTBD4 and RBX1. Post-translationally, neddylated. Attachment of NEDD8 is required for the E3 ubiquitin-protein ligase activity of the BCR complex. Deneddylated via its interaction with the COP9 signalosome (CSN) complex.

It localises to the nucleus. It is found in the golgi apparatus. The protein localises to the cell projection. The protein resides in the cilium. Its subcellular location is the flagellum. It localises to the cytoplasm. It is found in the cytoskeleton. The protein localises to the spindle. The protein resides in the microtubule organizing center. Its subcellular location is the centrosome. It localises to the spindle pole. It participates in protein modification; protein ubiquitination. In terms of biological role, core component of multiple cullin-RING-based BCR (BTB-CUL3-RBX1) E3 ubiquitin-protein ligase complexes which mediate the ubiquitination and subsequent proteasomal degradation of target proteins. BCR complexes and ARIH1 collaborate in tandem to mediate ubiquitination of target proteins. As a scaffold protein may contribute to catalysis through positioning of the substrate and the ubiquitin-conjugating enzyme. The E3 ubiquitin-protein ligase activity of the complex is dependent on the neddylation of the cullin subunit and is inhibited by the association of the deneddylated cullin subunit with TIP120A/CAND1. The functional specificity of the BCR complex depends on the BTB domain-containing protein as the substrate recognition component. BCR(KLHL42) is involved in ubiquitination of KATNA1. BCR(SPOP) is involved in ubiquitination of BMI1/PCGF4, BRMS1, MACROH2A1 and DAXX, GLI2 and GLI3. Can also form a cullin-RING-based BCR (BTB-CUL3-RBX1) E3 ubiquitin-protein ligase complex containing homodimeric SPOPL or the heterodimer formed by SPOP and SPOPL; these complexes have lower ubiquitin ligase activity. BCR(KLHL9-KLHL13) controls the dynamic behavior of AURKB on mitotic chromosomes and thereby coordinates faithful mitotic progression and completion of cytokinesis. BCR(KLHL12) is involved in ER-Golgi transport by regulating the size of COPII coats, thereby playing a key role in collagen export, which is required for embryonic stem (ES) cells division: BCR(KLHL12) acts by mediating monoubiquitination of SEC31 (SEC31A or SEC31B). BCR(KLHL3) acts as a regulator of ion transport in the distal nephron; by mediating ubiquitination of WNK4. The BCR(KLHL20) E3 ubiquitin ligase complex is involved in interferon response and anterograde Golgi to endosome transport: it mediates both ubiquitination leading to degradation and 'Lys-33'-linked ubiquitination. The BCR(KLHL21) E3 ubiquitin ligase complex regulates localization of the chromosomal passenger complex (CPC) from chromosomes to the spindle midzone in anaphase and mediates the ubiquitination of AURKB. The BCR(KLHL22) ubiquitin ligase complex mediates monoubiquitination of PLK1, leading to PLK1 dissociation from phosphoreceptor proteins and subsequent removal from kinetochores, allowing silencing of the spindle assembly checkpoint (SAC) and chromosome segregation. The BCR(KLHL22) ubiquitin ligase complex is also responsible for the amino acid-stimulated 'Lys-48' polyubiquitination and proteasomal degradation of DEPDC5. Through the degradation of DEPDC5, releases the GATOR1 complex-mediated inhibition of the TORC1 pathway. The BCR(KLHL25) ubiquitin ligase complex is involved in translational homeostasis by mediating ubiquitination and subsequent degradation of hypophosphorylated EIF4EBP1 (4E-BP1). The BCR(KLHL25) ubiquitin ligase complex is also involved in lipid synthesis by mediating ubiquitination and degradation of ACLY. The BCR(KBTBD8) complex acts by mediating monoubiquitination of NOLC1 and TCOF1, leading to remodel the translational program of differentiating cells in favor of neural crest specification. Involved in ubiquitination of cyclin E and of cyclin D1 (in vitro) thus involved in regulation of G1/S transition. Involved in the ubiquitination of KEAP1, ENC1 and KLHL41. In concert with ATF2 and RBX1, promotes degradation of KAT5 thereby attenuating its ability to acetylate and activate ATM. The BCR(KCTD17) E3 ubiquitin ligase complex mediates ubiquitination and degradation of TCHP, a down-regulator of cilium assembly, thereby inducing ciliogenesis. The BCR(KLHL24) E3 ubiquitin ligase complex mediates ubiquitination of KRT14, controls KRT14 levels during keratinocytes differentiation, and is essential for skin integrity. The BCR(KLHL18) E3 ubiquitin ligase complex mediates the ubiquitination of AURKA leading to its activation at the centrosome which is required for initiating mitotic entry. The BCR(KEAP1) E3 ubiquitin ligase complex acts as a key sensor of oxidative and electrophilic stress by mediating ubiquitination and degradation of NFE2L2/NRF2, a transcription factor regulating expression of many cytoprotective genes. As part of the CUL3(KBTBD6/7) E3 ubiquitin ligase complex functions mediates 'Lys-48' ubiquitination and proteasomal degradation of TIAM1. By controlling the ubiquitination of that RAC1 guanine exchange factors (GEF), regulates RAC1 signal transduction and downstream biological processes including the organization of the cytoskeleton, cell migration and cell proliferation. The BCR(KBTBD4) E3 ubiquitin ligase complex targets CoREST corepressor complex components RCOR1, KDM1A/LSD1 and HDAC2 for proteasomal degradation with RCOR1 likely to be the primary target while degradation of KDM1A and HDAC2 is likely due to their association with RCOR1. It also targets RCOR3, MIER2 and MIER3 for proteasomal degradation as well as associated proteins ZNF217 and RREB1 with degradation being dependent on the presence of an ELM2 domain in the target proteins. The BCR(ARMC5) complex mediates premature transcription termination of transcripts that are unfavorably configured for transcriptional elongation by mediating ubiquitination of Pol II subunit POLR2A. Required for 'Lys-63'-linked ubiquitination of large ribosomal subunit protein MRPL12. This chain is Cullin-3 (Cul3), found in Rattus norvegicus (Rat).